The following is a 92-amino-acid chain: Small ribosomal subunit protein uS19 (92 aa).

The protein belongs to the universal ribosomal protein uS19 family.

In terms of biological role, protein S19 forms a complex with S13 that binds strongly to the 16S ribosomal RNA. The sequence is that of Small ribosomal subunit protein uS19 from Exiguobacterium sibiricum (strain DSM 17290 / CCUG 55495 / CIP 109462 / JCM 13490 / 255-15).